An 89-amino-acid chain; its full sequence is Cell division topological specificity factor (89 aa).

Belongs to the MinE family.

Prevents the cell division inhibition by proteins MinC and MinD at internal division sites while permitting inhibition at polar sites. This ensures cell division at the proper site by restricting the formation of a division septum at the midpoint of the long axis of the cell. The protein is Cell division topological specificity factor of Pectobacterium atrosepticum (strain SCRI 1043 / ATCC BAA-672) (Erwinia carotovora subsp. atroseptica).